The sequence spans 95 residues: MALTLEQVRHVATLARLSLTPEEEQRFTTQLSAVLDAVEQLQSLDVEAVEPTSHATLTSSRLREDVTRPSLPPEKSLANAPAKSDTSFAVPKIIE.

Residues 51 to 95 form a disordered region; it reads PTSHATLTSSRLREDVTRPSLPPEKSLANAPAKSDTSFAVPKIIE.

The protein belongs to the GatC family. In terms of assembly, heterotrimer of A, B and C subunits.

It carries out the reaction L-glutamyl-tRNA(Gln) + L-glutamine + ATP + H2O = L-glutaminyl-tRNA(Gln) + L-glutamate + ADP + phosphate + H(+). The catalysed reaction is L-aspartyl-tRNA(Asn) + L-glutamine + ATP + H2O = L-asparaginyl-tRNA(Asn) + L-glutamate + ADP + phosphate + 2 H(+). Functionally, allows the formation of correctly charged Asn-tRNA(Asn) or Gln-tRNA(Gln) through the transamidation of misacylated Asp-tRNA(Asn) or Glu-tRNA(Gln) in organisms which lack either or both of asparaginyl-tRNA or glutaminyl-tRNA synthetases. The reaction takes place in the presence of glutamine and ATP through an activated phospho-Asp-tRNA(Asn) or phospho-Glu-tRNA(Gln). The protein is Aspartyl/glutamyl-tRNA(Asn/Gln) amidotransferase subunit C of Myxococcus xanthus (strain DK1622).